The following is a 365-amino-acid chain: Chorismate synthase (365 aa).

The NADP(+) site is built by R48 and R54. Residues 125-127 (RSS), 237-238 (NA), G277, 292-296 (KPTSS), and R318 contribute to the FMN site.

It belongs to the chorismate synthase family. Homotetramer. The cofactor is FMNH2.

The catalysed reaction is 5-O-(1-carboxyvinyl)-3-phosphoshikimate = chorismate + phosphate. Its pathway is metabolic intermediate biosynthesis; chorismate biosynthesis; chorismate from D-erythrose 4-phosphate and phosphoenolpyruvate: step 7/7. Its function is as follows. Catalyzes the anti-1,4-elimination of the C-3 phosphate and the C-6 proR hydrogen from 5-enolpyruvylshikimate-3-phosphate (EPSP) to yield chorismate, which is the branch point compound that serves as the starting substrate for the three terminal pathways of aromatic amino acid biosynthesis. This reaction introduces a second double bond into the aromatic ring system. The protein is Chorismate synthase of Verminephrobacter eiseniae (strain EF01-2).